Consider the following 421-residue polypeptide: Plant UBX domain-containing protein 5 (421 aa).

In terms of domain architecture, UBA spans Glu-4 to Asn-45. Disordered regions lie at residues Asp-46–Gln-171 and Glu-292–Gly-338. A compositionally biased stretch (polar residues) spans Gln-69–Thr-84. The span at Ser-85–Pro-102 shows a compositional bias: low complexity. One can recognise an SEP domain in the interval Arg-231–Thr-295. Positions Gly-312–Pro-328 are enriched in low complexity. The region spanning Pro-343–Lys-420 is the UBX domain.

As to quaternary structure, interacts with CDC48A (non-hexameric) via its UBX domain.

The sequence is that of Plant UBX domain-containing protein 5 from Arabidopsis thaliana (Mouse-ear cress).